The following is a 252-amino-acid chain: Chitooligosaccharide deacetylase (252 aa).

Mg(2+) is bound by residues H61 and H125.

This sequence belongs to the YdjC deacetylase family. ChbG subfamily. Homodimer. It depends on Mg(2+) as a cofactor.

The protein resides in the cytoplasm. It carries out the reaction N,N'-diacetylchitobiose + H2O = N-acetyl-beta-D-glucosaminyl-(1-&gt;4)-D-glucosamine + acetate. The enzyme catalyses diacetylchitobiose-6'-phosphate + H2O = N'-monoacetylchitobiose-6'-phosphate + acetate. It participates in glycan degradation; chitin degradation. Functionally, involved in the degradation of chitin. ChbG is essential for growth on the acetylated chitooligosaccharides chitobiose and chitotriose but is dispensable for growth on cellobiose and chitosan dimer, the deacetylated form of chitobiose. Deacetylation of chitobiose-6-P and chitotriose-6-P is necessary for both the activation of the chb promoter by the regulatory protein ChbR and the hydrolysis of phosphorylated beta-glucosides by the phospho-beta-glucosidase ChbF. Catalyzes the removal of only one acetyl group from chitobiose-6-P to yield monoacetylchitobiose-6-P, the inducer of ChbR and the substrate of ChbF. This Escherichia coli O6:H1 (strain CFT073 / ATCC 700928 / UPEC) protein is Chitooligosaccharide deacetylase.